The following is a 233-amino-acid chain: Small ribosomal subunit protein uS2c (233 aa).

The protein belongs to the universal ribosomal protein uS2 family.

It is found in the plastid. The protein resides in the cyanelle. This is Small ribosomal subunit protein uS2c (rps2) from Cyanophora paradoxa.